The following is a 150-amino-acid chain: UPF0506 protein SJCHGC03144 (150 aa).

Residues 1 to 18 (MNTCIQLLILCLVTVINS) form the signal peptide. N-linked (GlcNAc...) asparagine glycosylation is found at asparagine 20, asparagine 36, asparagine 52, and asparagine 110. Cystine bridges form between cysteine 116-cysteine 130, cysteine 123-cysteine 134, and cysteine 129-cysteine 139.

It belongs to the UPF0506 family.

It localises to the secreted. This is UPF0506 protein SJCHGC03144 from Schistosoma japonicum (Blood fluke).